We begin with the raw amino-acid sequence, 176 residues long: ATP-dependent protease subunit HslV (176 aa).

T5 is a catalytic residue. Residues S161, C164, and T167 each contribute to the Na(+) site.

Belongs to the peptidase T1B family. HslV subfamily. As to quaternary structure, a double ring-shaped homohexamer of HslV is capped on each side by a ring-shaped HslU homohexamer. The assembly of the HslU/HslV complex is dependent on binding of ATP.

It localises to the cytoplasm. It catalyses the reaction ATP-dependent cleavage of peptide bonds with broad specificity.. Its activity is regulated as follows. Allosterically activated by HslU binding. Its function is as follows. Protease subunit of a proteasome-like degradation complex believed to be a general protein degrading machinery. This is ATP-dependent protease subunit HslV from Thermoanaerobacter pseudethanolicus (strain ATCC 33223 / 39E) (Clostridium thermohydrosulfuricum).